The primary structure comprises 234 residues: Acetylxylan esterase 2 (234 aa).

Positions methionine 1–alanine 17 are cleaved as a signal peptide. A propeptide spanning residues isoleucine 18–arginine 27 is cleaved from the precursor. 2 disulfides stabilise this stretch: cysteine 29–cysteine 106 and cysteine 73–cysteine 79. Serine 117 is a catalytic residue. Cystine bridges form between cysteine 128/cysteine 188, cysteine 174/cysteine 206, and cysteine 198/cysteine 205. Aspartate 202 is an active-site residue. Asparagine 207 carries N-linked (GlcNAc...) asparagine glycosylation. Histidine 214 is a catalytic residue.

It belongs to the cutinase family. Acetylxylan esterase subfamily. As to quaternary structure, monomer.

Its subcellular location is the secreted. It carries out the reaction Deacetylation of xylans and xylo-oligosaccharides.. It functions in the pathway glycan degradation; xylan degradation. Degrades acetylated xylans by cleaving acetyl side groups from the hetero-xylan backbone. The polypeptide is Acetylxylan esterase 2 (axe-2) (Talaromyces purpureogenus (Soft rot fungus)).